A 64-amino-acid polypeptide reads, in one-letter code: Myotoxin-2 (64 aa).

An N-terminal signal peptide occupies residues 1–21 (KILYLLFAFLFLAFLSEPGNA). Cys-32 and Cys-51 are disulfide-bonded.

Belongs to the crotamine-myotoxin family. In terms of assembly, monomer. Expressed by the venom gland.

The protein localises to the secreted. Its function is as follows. Cationic peptide that possesses multiple functions. It acts as a cell-penetrating peptide (CPP), and as a potent voltage-gated potassium channel (Kv) inhibitor. It exhibits antimicrobial activities, hind limb paralysis, and severe muscle necrosis by a non-enzymatic mechanism. This chain is Myotoxin-2, found in Crotalus durissus terrificus (South American rattlesnake).